Consider the following 374-residue polypeptide: Calcium/calmodulin-dependent protein kinase type 1 (374 aa).

The 257-residue stretch at 20 to 276 (YDFRDVLGTG…CEQALQHPWI (257 aa)) folds into the Protein kinase domain. ATP-binding positions include 26–34 (LGTGAFSEV) and Lys-49. Lys-59 participates in a covalent cross-link: Glycyl lysine isopeptide (Lys-Gly) (interchain with G-Cter in ubiquitin). Asp-141 (proton acceptor) is an active-site residue. Thr-177 carries the phosphothreonine; by CaMKK1 and CaMKK2 modification. The short motif at 263 to 264 (KR) is the Involved in nuclear import element. The interval 276–316 (IAGDTALDKNIHQSVSEQIKKNFAKSKWKQAFNATAVVRHM) is autoinhibitory domain. Residues 296-317 (KNFAKSKWKQAFNATAVVRHMR) form a calmodulin-binding region. A Nuclear export signal motif is present at residues 315 to 321 (HMRKLQL).

The protein belongs to the protein kinase superfamily. CAMK Ser/Thr protein kinase family. CaMK subfamily. As to quaternary structure, monomer. Interacts with XPO1. Phosphorylated by CaMKK1 and CaMKK2 on Thr-177. Post-translationally, polybiquitinated by the E3 ubiquitin-protein ligase complex SCF(FBXL12), leading to proteasomal degradation. Widely expressed.

It localises to the cytoplasm. It is found in the nucleus. The catalysed reaction is L-seryl-[protein] + ATP = O-phospho-L-seryl-[protein] + ADP + H(+). It catalyses the reaction L-threonyl-[protein] + ATP = O-phospho-L-threonyl-[protein] + ADP + H(+). With respect to regulation, activated by Ca(2+)/calmodulin. Binding of calmodulin results in conformational change that relieves intrasteric autoinhibition and allows phosphorylation of Thr-177 within the activation loop by CaMKK1 or CaMKK2. Phosphorylation of Thr-177 results in several fold increase in total activity. Unlike CaMK4, is unable to exhibit autonomous activity after Ca(2+)/calmodulin activation. Functionally, calcium/calmodulin-dependent protein kinase that operates in the calcium-triggered CaMKK-CaMK1 signaling cascade and, upon calcium influx, regulates transcription activators activity, cell cycle, hormone production, cell differentiation, actin filament organization and neurite outgrowth. Recognizes the substrate consensus sequence [MVLIF]-x-R-x(2)-[ST]-x(3)-[MVLIF]. Regulates axonal extension and growth cone motility in hippocampal and cerebellar nerve cells. Upon NMDA receptor-mediated Ca(2+) elevation, promotes dendritic growth in hippocampal neurons and is essential in synapses for full long-term potentiation (LTP) and ERK2-dependent translational activation. Downstream of NMDA receptors, promotes the formation of spines and synapses in hippocampal neurons by phosphorylating ARHGEF7/BETAPIX on 'Ser-516', which results in the enhancement of ARHGEF7 activity and activation of RAC1. Promotes neuronal differentiation and neurite outgrowth by activation and phosphorylation of MARK2 on 'Ser-91', 'Ser-92', 'Ser-93' and 'Ser-294'. Promotes nuclear export of HDAC5 and binding to 14-3-3 by phosphorylation of 'Ser-259' and 'Ser-498' in the regulation of muscle cell differentiation. Regulates NUMB-mediated endocytosis by phosphorylation of NUMB on 'Ser-275' and 'Ser-294'. Involved in the regulation of basal and estrogen-stimulated migration of medulloblastoma cells through ARHGEF7/BETAPIX phosphorylation. Is required for proper activation of cyclin-D1/CDK4 complex during G1 progression in diploid fibroblasts. Plays a role in K(+) and ANG2-mediated regulation of the aldosterone synthase (CYP11B2) to produce aldosterone in the adrenal cortex. Phosphorylates EIF4G3/eIF4GII. In vitro phosphorylates CREB1, ATF1, CFTR, MYL9 and SYN1/synapsin I. The sequence is that of Calcium/calmodulin-dependent protein kinase type 1 (Camk1) from Rattus norvegicus (Rat).